The primary structure comprises 255 residues: HLA class II histocompatibility antigen, DQ alpha 2 chain (255 aa).

The N-terminal stretch at 1–23 (MILNKALLLGALALTAVMSPCGG) is a signal peptide. The segment at 24 to 110 (EDIVADHVAS…RQSNSTAATN (87 aa)) is alpha-1. Over 24 to 217 (EDIVADHVAS…IPAPMSELTE (194 aa)) the chain is Extracellular. 2 N-linked (GlcNAc...) asparagine glycosylation sites follow: N104 and N144. Positions 111-204 (EVPEVTVFSK…GLDEPLLKHW (94 aa)) are alpha-2. Residues 113–205 (PEVTVFSKFP…LDEPLLKHWE (93 aa)) form the Ig-like C1-type domain. The cysteines at positions 133 and 189 are disulfide-linked. The interval 205–217 (EPEIPAPMSELTE) is connecting peptide. The helical transmembrane segment at 218–240 (TLVCALGLSVGLMGIVVGTVFII) threads the bilayer. Topologically, residues 241–255 (QGLRSVGASRHQGLL) are cytoplasmic.

This sequence belongs to the MHC class II family. In terms of assembly, heterodimer of an alpha and a beta subunit; also referred as MHC class II molecule. Dimer formation with HLA-DQB2, but not with HLA-DQB1, is required for efficient exit from the endoplasmic reticulum (ER). In the ER, forms a heterononamer; 3 MHC class II molecules bind to a CD74 homotrimer (also known as invariant chain or HLA class II histocompatibility antigen gamma chain). In the endosomal/lysosomal system; CD74 undergoes sequential degradation by various proteases; leaving a small fragment termed CLIP on each MHC class II molecule. MHC class II molecule interacts with HLA_DM, and HLA_DO in B-cells, in order to release CLIP and facilitate the binding of antigenic peptides. Association with HLA-DMA also occurs in skin Langerhans cells, in post-Golgi compartments. As to expression, restricted to skin Langerhans cells, although some expression at low levels may occur at the surface of B lymphoblastoid cells.

The protein resides in the cell membrane. The protein localises to the endoplasmic reticulum membrane. It is found in the golgi apparatus. Its subcellular location is the trans-Golgi network membrane. It localises to the endosome membrane. The protein resides in the lysosome membrane. In terms of biological role, binds peptides derived from antigens that access the endocytic route of antigen presenting cells (APC) and presents them on the cell surface for recognition by the CD4 T-cells. The peptide binding cleft accommodates peptides of 10-30 residues. The peptides presented by MHC class II molecules are generated mostly by degradation of proteins that access the endocytic route, where they are processed by lysosomal proteases and other hydrolases. Exogenous antigens that have been endocytosed by the APC are thus readily available for presentation via MHC II molecules, and for this reason this antigen presentation pathway is usually referred to as exogenous. As membrane proteins on their way to degradation in lysosomes as part of their normal turn-over are also contained in the endosomal/lysosomal compartments, exogenous antigens must compete with those derived from endogenous components. Autophagy is also a source of endogenous peptides, autophagosomes constitutively fuse with MHC class II loading compartments. In addition to APCs, other cells of the gastrointestinal tract, such as epithelial cells, express MHC class II molecules and CD74 and act as APCs, which is an unusual trait of the GI tract. To produce a MHC class II molecule that presents an antigen, three MHC class II molecules (heterodimers of an alpha and a beta chain) associate with a CD74 trimer in the ER to form a heterononamer. Soon after the entry of this complex into the endosomal/lysosomal system where antigen processing occurs, CD74 undergoes a sequential degradation by various proteases, including CTSS and CTSL, leaving a small fragment termed CLIP (class-II-associated invariant chain peptide). The removal of CLIP is facilitated by HLA-DM via direct binding to the alpha-beta-CLIP complex so that CLIP is released. HLA-DM stabilizes MHC class II molecules until primary high affinity antigenic peptides are bound. The MHC II molecule bound to a peptide is then transported to the cell membrane surface. In B-cells, the interaction between HLA-DM and MHC class II molecules is regulated by HLA-DO. Primary dendritic cells (DCs) also to express HLA-DO. Lysosomal microenvironment has been implicated in the regulation of antigen loading into MHC II molecules, increased acidification produces increased proteolysis and efficient peptide loading. The chain is HLA class II histocompatibility antigen, DQ alpha 2 chain (HLA-DQA2) from Homo sapiens (Human).